A 184-amino-acid chain; its full sequence is Ribosome-recycling factor (184 aa).

Residues 141–164 are disordered; sequence DEKNGDITEDDLRSQTEDVQKATD.

The protein belongs to the RRF family.

It localises to the cytoplasm. Functionally, responsible for the release of ribosomes from messenger RNA at the termination of protein biosynthesis. May increase the efficiency of translation by recycling ribosomes from one round of translation to another. The protein is Ribosome-recycling factor of Staphylococcus haemolyticus (strain JCSC1435).